Here is a 142-residue protein sequence, read N- to C-terminus: uncharacterized protein (142 aa).

A Peptidase C39 domain is found at 18–137 (QSSGYSCGPA…KIFTGNVLVV (120 aa)).

This is an uncharacterized protein from Methanothermobacter marburgensis (strain ATCC BAA-927 / DSM 2133 / JCM 14651 / NBRC 100331 / OCM 82 / Marburg) (Methanobacterium thermoautotrophicum).